The following is a 155-amino-acid chain: Small ribosomal subunit protein uS7 (155 aa).

Belongs to the universal ribosomal protein uS7 family. Part of the 30S ribosomal subunit. Contacts proteins S9 and S11.

Functionally, one of the primary rRNA binding proteins, it binds directly to 16S rRNA where it nucleates assembly of the head domain of the 30S subunit. Is located at the subunit interface close to the decoding center, probably blocks exit of the E-site tRNA. In Petrotoga mobilis (strain DSM 10674 / SJ95), this protein is Small ribosomal subunit protein uS7.